A 245-amino-acid polypeptide reads, in one-letter code: E3 ubiquitin-protein ligase RNF138 (245 aa).

Alanine 2 is subject to N-acetylalanine. Residues 18 to 58 (CPVCQEVLKTPVRTTACQHVFCRKCFLTAMRESGAHCPLCR) form an RING-type zinc finger. The Zn(2+) site is built by cysteine 86, cysteine 89, histidine 101, and cysteine 105. The segment at 86-105 (CRCCAKQIKFYRMRHHYKSC) adopts a C2HC RNF-type zinc-finger fold. Residues 125-154 (QDSVGNSNRSETSTSDNTETYQENTSSSGH) form a disordered region. Threonine 142 bears the Phosphothreonine mark. C2H2-type zinc fingers lie at residues 157–180 (FKCP…NSNH) and 187–215 (VTCP…NQRH). Residues 225–243 (LQLDEETQYQTAVEESFQV) enclose the UIM domain.

As to quaternary structure, interacts with NLK. Interacts with XRCC5/Ku80. Interacts with RBBP8/CtIP. In terms of processing, auto-ubiquitinated.

Its subcellular location is the chromosome. It catalyses the reaction S-ubiquitinyl-[E2 ubiquitin-conjugating enzyme]-L-cysteine + [acceptor protein]-L-lysine = [E2 ubiquitin-conjugating enzyme]-L-cysteine + N(6)-ubiquitinyl-[acceptor protein]-L-lysine.. It participates in protein modification; protein ubiquitination. E3 ubiquitin-protein ligase involved in DNA damage response by promoting DNA resection and homologous recombination. Recruited to sites of double-strand breaks following DNA damage and specifically promotes double-strand break repair via homologous recombination. Two different, non-exclusive, mechanisms have been proposed. According to a report, regulates the choice of double-strand break repair by favoring homologous recombination over non-homologous end joining (NHEJ): acts by mediating ubiquitination of XRCC5/Ku80, leading to remove the Ku complex from DNA breaks, thereby promoting homologous recombination. According to another report, cooperates with UBE2Ds E2 ubiquitin ligases (UBE2D1, UBE2D2, UBE2D3 or UBE2D4) to promote homologous recombination by mediating ubiquitination of RBBP8/CtIP. Together with NLK, involved in the ubiquitination and degradation of TCF/LEF. Also exhibits auto-ubiquitination activity in combination with UBE2K. May act as a negative regulator in the Wnt/beta-catenin-mediated signaling pathway. This is E3 ubiquitin-protein ligase RNF138 from Homo sapiens (Human).